The following is a 79-amino-acid chain: Small ribosomal subunit protein eS17 (79 aa).

This sequence belongs to the eukaryotic ribosomal protein eS17 family.

The protein is Small ribosomal subunit protein eS17 of Saccharolobus solfataricus (strain ATCC 35092 / DSM 1617 / JCM 11322 / P2) (Sulfolobus solfataricus).